The chain runs to 174 residues: NADH-quinone oxidoreductase subunit C (174 aa).

It belongs to the complex I 30 kDa subunit family. NDH-1 is composed of 14 different subunits. Subunits NuoB, C, D, E, F, and G constitute the peripheral sector of the complex.

The protein localises to the cell membrane. The enzyme catalyses a quinone + NADH + 5 H(+)(in) = a quinol + NAD(+) + 4 H(+)(out). Functionally, NDH-1 shuttles electrons from NADH, via FMN and iron-sulfur (Fe-S) centers, to quinones in the respiratory chain. The immediate electron acceptor for the enzyme in this species is believed to be ubiquinone. Couples the redox reaction to proton translocation (for every two electrons transferred, four hydrogen ions are translocated across the cytoplasmic membrane), and thus conserves the redox energy in a proton gradient. The polypeptide is NADH-quinone oxidoreductase subunit C (Roseiflexus castenholzii (strain DSM 13941 / HLO8)).